The primary structure comprises 292 residues: Malonyl-S-ACP:biotin-protein carboxyltransferase MADD (292 aa).

The CoA carboxyltransferase C-terminal domain maps to Met1–Lys281.

It is found in the cytoplasm. The enzyme catalyses N(6)-biotinyl-L-lysyl-[protein] + malonyl-[ACP] = N(6)-carboxybiotinyl-L-lysyl-[protein] + acetyl-[ACP]. Its function is as follows. Gamma subunit of the biotin-dependent malonate decarboxylase multienzyme complex (EC 7.2.4.4). The two subunits MADC and MADD are required for the transfer of the malonate carboxy group from the acyl-carrier protein (ACP) to the prosthetic group of the biotin carrier MADF. Required for the regeneration of ACP. The chain is Malonyl-S-ACP:biotin-protein carboxyltransferase MADD (madD) from Malonomonas rubra.